We begin with the raw amino-acid sequence, 686 residues long: CAI-1 autoinducer sensor kinase/phosphatase CqsS (686 aa).

Transmembrane regions (helical) follow at residues 21–41 (LVGW…EYWF), 47–64 (NLGL…LVFR), 77–97 (GYFL…MMLM), 100–120 (WSTI…LLVH), 124–144 (VMAL…YGLT), and 152–172 (IEWQ…LCFF). Positions 191-416 (GIAHEMRNPL…EFVLSFPRYD (226 aa)) constitute a Histidine kinase domain. Position 194 is a phosphohistidine; by autocatalysis (H194). The Response regulatory domain maps to 569–686 (RILVVDDNQS…VLLNKVAAWV (118 aa)). A 4-aspartylphosphate modification is found at D618.

The protein resides in the cell membrane. The enzyme catalyses ATP + protein L-histidine = ADP + protein N-phospho-L-histidine.. In terms of biological role, senses the quorum-sensing autoinducer CAI-1 ((S)-3-hydroxytridecan-4-one) which probably functions as an intragenus signal. The sensory signal is then relayed to LuxU and LuxO. This is CAI-1 autoinducer sensor kinase/phosphatase CqsS (cqsS) from Vibrio cholerae serotype O1 (strain ATCC 39315 / El Tor Inaba N16961).